Here is a 749-residue protein sequence, read N- to C-terminus: Putative Xaa-Pro aminopeptidase FRA1 (749 aa).

The interval 1–33 (MTSKPSTSDGRAHSISHVPGTHMRGTSASHSPR) is disordered. Phosphoserine occurs at positions 69, 92, and 95. Positions 551, 562, 660, and 674 each coordinate Mn(2+).

This sequence belongs to the peptidase M24B family. As to quaternary structure, homodimer. Interacts with FRA2. It depends on Mn(2+) as a cofactor.

The protein resides in the cytoplasm. It catalyses the reaction Release of any N-terminal amino acid, including proline, that is linked to proline, even from a dipeptide or tripeptide.. Functionally, involved in the regulation of the iron regulon in responss to decreased mitochondrial iron-sulfur cluster synthesis. This is Putative Xaa-Pro aminopeptidase FRA1 (FRA1) from Saccharomyces cerevisiae (strain ATCC 204508 / S288c) (Baker's yeast).